Consider the following 441-residue polypeptide: 3-phosphoshikimate 1-carboxyvinyltransferase (441 aa).

Lysine 25, serine 26, and arginine 30 together coordinate 3-phosphoshikimate. Residue lysine 25 coordinates phosphoenolpyruvate. The phosphoenolpyruvate site is built by glycine 97 and arginine 125. 3-phosphoshikimate contacts are provided by serine 169, glutamine 170, aspartate 311, and lysine 338. Glutamine 170 lines the phosphoenolpyruvate pocket. Aspartate 311 serves as the catalytic Proton acceptor. Positions 342, 383, and 410 each coordinate phosphoenolpyruvate.

It belongs to the EPSP synthase family. As to quaternary structure, monomer.

It localises to the cytoplasm. The catalysed reaction is 3-phosphoshikimate + phosphoenolpyruvate = 5-O-(1-carboxyvinyl)-3-phosphoshikimate + phosphate. It functions in the pathway metabolic intermediate biosynthesis; chorismate biosynthesis; chorismate from D-erythrose 4-phosphate and phosphoenolpyruvate: step 6/7. Functionally, catalyzes the transfer of the enolpyruvyl moiety of phosphoenolpyruvate (PEP) to the 5-hydroxyl of shikimate-3-phosphate (S3P) to produce enolpyruvyl shikimate-3-phosphate and inorganic phosphate. In Chlamydia muridarum (strain MoPn / Nigg), this protein is 3-phosphoshikimate 1-carboxyvinyltransferase.